A 978-amino-acid chain; its full sequence is MSTTSVQHFAPSYPPFSSGLSSNRMAQSQTPGLDTLAEGSQYALEQLQLSREAAAGDTTATAASGPSDPMSKSKDPYDFDHHNHNHHNHHNNNHHPNSNSNNSLPGFKNPAQRDPLAEARSAIRKNSSSAPVRRRISRACDQCNQLRTRCDGQNPCAHCIEFGLTCEYARERKKRGKASKKDLAAAAAAATATPGQPNENPGKDSGTMVGGHSPPDRRQELNGRYDPAFDAARNLSGSAQPQLPHAEGPGMVGMPNTQHLPSPSQPPMGGGLEGLPMNGYNGLNDSNRPPIPVSELQSLHMLHSSNPHPRSPPSILPSQRYNGGYNENAYSLMNPQEHNPTPMNQFRLGNSTENPPNTFLGLSPPAQSPGWLPLPSPSPANFPSFSMASFSTTLRYPVLHPVLPHIASIIPQSLACDLLDVYFTSSSSSHLSPQSPYVVGYIFRKQSFLHPTKPRACSPGLLASMLWVAAQTSDAPFLTSPPSARGRVCQKLLELTVGLLRPLIHGPAPGETSPNYAANMVINGIALGGFGVSMDQLGAQSSATGAVDDVATYVHLATVISASEYKAASMRWWTAAWSLARELKLGRELPPNTSQTRQDGERENDPDADPSNRHSPSLITAMGHGPGNTVINVTEDEREERRRLWWLLYATDRHLALCYNRPLTLLDKECNGLLQPMNDDLWQASDFASASYRQAGPPLECSGHSMFGYFLPLMTILGEIIDLQQARNHPRFGLAFRGSPECDAQVLEIARQLDLYAQTLKEFETRYTSGLALGAADNDTAMEGSHLNHVSPSGRSSSTVDSRVNESIVHTKMVVAYGTHIMHVLHILLAGKWDPINLLDDNDLWISSESFIAAMGHAVGAAEAAADILEYDPDLSFMPFFFGIYLLQGSFLLLLTADKLQGDASPSVVRACETIVRAHEACVVTLNTEYQRTFRKVMRSALAQVRGRLPEDFGEQQQRRREVLALYRWTGDGSGLAL.

Disordered stretches follow at residues 1–39 (MSTT…LAEG) and 53–116 (AAAG…RDPL). A compositionally biased stretch (polar residues) spans 18–32 (SGLSSNRMAQSQTPG). The span at 53–69 (AAAGDTTATAASGPSDP) shows a compositional bias: low complexity. Basic and acidic residues predominate over residues 71–82 (SKSKDPYDFDHH). Positions 83–93 (NHNHHNHHNNN) are enriched in basic residues. Positions 94–103 (HHPNSNSNNS) are enriched in low complexity. The segment at residues 140–166 (CDQCNQLRTRCDGQNPCAHCIEFGLTC) is a DNA-binding region (zn(2)-C6 fungal-type). Disordered regions lie at residues 179–223 (SKKD…ELNG), 238–293 (SAQP…PIPV), and 588–629 (ELPP…PGNT). Low complexity predominate over residues 184 to 193 (AAAAAAATAT). Residues 214–223 (PPDRRQELNG) are compositionally biased toward basic and acidic residues.

It belongs to the xlnR/xlr1 family.

The protein localises to the nucleus. Functionally, transcriptional activator of the xylanolytic system. Involved in the regulation of extracellular cellulolytic and xylanolytic genes and in the regulation of the intracellular activities of D-xylose catabolic genes in the pentose catabolic pathway (PCP) in response to the presence of D-xylose. The polypeptide is Xylanolytic transcriptional activator xlnR (xlnR) (Aspergillus clavatus (strain ATCC 1007 / CBS 513.65 / DSM 816 / NCTC 3887 / NRRL 1 / QM 1276 / 107)).